The primary structure comprises 387 residues: Chaperone protein DnaJ (387 aa).

A J domain is found at 4–68 (DFYDVLGVSR…EKRQMYDQLG (65 aa)). The segment at 76 to 135 (EKRGGVGGGGNSSGGSARGDPFGGMGGQGSPFGDIFEQFFGGGQGQRRQGNRPRQGQNLQ) is disordered. Residues 80 to 105 (GVGGGGNSSGGSARGDPFGGMGGQGS) show a composition bias toward gly residues. Residues 121–133 (QRRQGNRPRQGQN) are compositionally biased toward low complexity. Residues 148–230 (GVEKQFTVRR…CNGDGVTRQE (83 aa)) form a CR-type zinc finger. Zn(2+)-binding residues include C161, C164, C178, C181, C204, C207, C218, and C221. CXXCXGXG motif repeat units lie at residues 161-168 (CPDCNGRG), 178-185 (CPQCNGQG), 204-211 (CPRCDGSG), and 218-225 (CSTCNGDG).

This sequence belongs to the DnaJ family. Homodimer. Zn(2+) serves as cofactor.

The protein resides in the cytoplasm. Functionally, participates actively in the response to hyperosmotic and heat shock by preventing the aggregation of stress-denatured proteins and by disaggregating proteins, also in an autonomous, DnaK-independent fashion. Unfolded proteins bind initially to DnaJ; upon interaction with the DnaJ-bound protein, DnaK hydrolyzes its bound ATP, resulting in the formation of a stable complex. GrpE releases ADP from DnaK; ATP binding to DnaK triggers the release of the substrate protein, thus completing the reaction cycle. Several rounds of ATP-dependent interactions between DnaJ, DnaK and GrpE are required for fully efficient folding. Also involved, together with DnaK and GrpE, in the DNA replication of plasmids through activation of initiation proteins. This Haloquadratum walsbyi (strain DSM 16790 / HBSQ001) protein is Chaperone protein DnaJ.